The following is a 411-amino-acid chain: Protein-lysine 6-oxidase (411 aa).

An N-terminal signal peptide occupies residues 1–21 (MRFAWTVLFLGQLQFCPLLRC). Residues 22–162 (APQAPREPPA…PPSHVDRMVG (141 aa)) constitute a propeptide, removed by BMP1. The interval 60-168 (PQRRRDSSAT…RMVGDDPYNP (109 aa)) is disordered. N-linked (GlcNAc...) asparagine glycans are attached at residues N91 and N138. Y181 carries the post-translational modification Sulfotyrosine. The segment at 207–411 (PDLVPDPYYI…YASGCTISPY (205 aa)) is lysyl-oxidase like. Intrachain disulfides connect C232/C238, C285/C334, C318/C324, C345/C355, and C392/C406. 3 residues coordinate Cu cation: H286, H288, and H290. Residues 314 to 349 (KASFCLEDTSCDYGYHRRFACTAHTQGLSPGCYDTY) constitute a cross-link (lysine tyrosylquinone (Lys-Tyr)). Y349 carries the post-translational modification 2',4',5'-topaquinone.

The protein belongs to the lysyl oxidase family. In terms of assembly, interacts with MFAP4. Interacts (via propeptide) with EFEMP2; this interaction is strong and facilitates formation of ternary complexes with ELN during elastic fiber assembly; this interaction limits interaction of EFEMP2 with FBLN5. Cu cation is required as a cofactor. Requires lysine tyrosylquinone residue as cofactor. The lysine tyrosylquinone cross-link (LTQ) is generated by condensation of the epsilon-amino group of a lysine with a topaquinone produced by oxidation of tyrosine. Post-translationally, proteolytically cleaved by BMP1 which removes the propeptide. Also proteolytically cleaved by ADAMTS2 and ADAMTS14, but not by ADAMTS3, at an additional cleavage site downstream of the BMP1 cleavage site. The propeptide plays a role in directing the deposition of this enzyme to elastic fibers, via interaction with tropoelastin. Cleavage by BMP1 to remove the propeptide does not increase enzymatic activity but increases binding to collagen. Cleavage by ADAMTS2 produces a form with reduced collagen-binding activity. In terms of processing, sulfated at Tyr-181 and also at either Tyr-177 or Tyr-178 which enhances binding to collagen. As to expression, aorta and lung.

It is found in the secreted. The protein localises to the extracellular space. The catalysed reaction is L-lysyl-[protein] + O2 + H2O = (S)-2-amino-6-oxohexanoyl-[protein] + H2O2 + NH4(+). In terms of biological role, responsible for the post-translational oxidative deamination of peptidyl lysine residues in precursors to fibrous collagen and elastin. Regulator of Ras expression. May play a role in tumor suppression. Plays a role in the aortic wall architecture. This Rattus norvegicus (Rat) protein is Protein-lysine 6-oxidase.